The following is a 334-amino-acid chain: Ribosomal RNA small subunit methyltransferase C (334 aa).

Belongs to the methyltransferase superfamily. RsmC family. Monomer.

It is found in the cytoplasm. The catalysed reaction is guanosine(1207) in 16S rRNA + S-adenosyl-L-methionine = N(2)-methylguanosine(1207) in 16S rRNA + S-adenosyl-L-homocysteine + H(+). In terms of biological role, specifically methylates the guanine in position 1207 of 16S rRNA in the 30S particle. This Idiomarina loihiensis (strain ATCC BAA-735 / DSM 15497 / L2-TR) protein is Ribosomal RNA small subunit methyltransferase C.